Reading from the N-terminus, the 307-residue chain is GTPase Era (307 aa).

The Era-type G domain occupies 17 to 186 (RCGFVAIVGR…LELIKPYLPE (170 aa)). Residues 25-32 (GRPNVGKS) form a G1 region. 25-32 (GRPNVGKS) lines the GTP pocket. The tract at residues 51-55 (QTTRN) is G2. Residues 72-75 (DTPG) are G3. Residues 72 to 76 (DTPGF) and 133 to 136 (NKID) each bind GTP. Residues 133 to 136 (NKID) form a G4 region. A G5 region spans residues 165–167 (VSA). Residues 217-293 (LGEELPYAMN…FLKVWVKVKS (77 aa)) enclose the KH type-2 domain.

This sequence belongs to the TRAFAC class TrmE-Era-EngA-EngB-Septin-like GTPase superfamily. Era GTPase family. As to quaternary structure, monomer.

The protein resides in the cytoplasm. The protein localises to the cell inner membrane. An essential GTPase that binds both GDP and GTP, with rapid nucleotide exchange. Plays a role in 16S rRNA processing and 30S ribosomal subunit biogenesis and possibly also in cell cycle regulation and energy metabolism. In Neisseria meningitidis serogroup B (strain ATCC BAA-335 / MC58), this protein is GTPase Era.